The primary structure comprises 147 residues: UPF0735 ACT domain-containing protein YszB (147 aa).

One can recognise an ACT domain in the interval 70 to 145 (TLFFHLEDRS…FVEKVEILGS (76 aa)).

The protein belongs to the UPF0735 family.

The protein is UPF0735 ACT domain-containing protein YszB (yszB) of Bacillus subtilis (strain 168).